We begin with the raw amino-acid sequence, 110 residues long: Large ribosomal subunit protein uL23c (110 aa).

This sequence belongs to the universal ribosomal protein uL23 family. As to quaternary structure, part of the 50S ribosomal subunit.

It is found in the plastid. It localises to the chloroplast. Functionally, binds to 23S rRNA. The chain is Large ribosomal subunit protein uL23c (rpl23) from Porphyra purpurea (Red seaweed).